The chain runs to 179 residues: Translationally-controlled tumor protein homolog (179 aa).

One can recognise a TCTP domain in the interval 1–179 (MIIYKDIISG…WKHGLEEMKV (179 aa)).

The protein belongs to the TCTP family.

The protein localises to the cytoplasm. It is found in the cytoskeleton. Functionally, involved in protein synthesis. Involved in microtubule stabilization. The protein is Translationally-controlled tumor protein homolog of Aspergillus fumigatus (strain ATCC MYA-4609 / CBS 101355 / FGSC A1100 / Af293) (Neosartorya fumigata).